The sequence spans 467 residues: Cis-zeatin O-glucosyltransferase 1 (467 aa).

The Proton acceptor role is filled by His-21. Residues His-21 and Asn-91 each coordinate an anthocyanidin. Asp-127 (charge relay) is an active-site residue. Positions 343, 345, 360, 363, 364, 365, 368, 384, and 385 each coordinate UDP-alpha-D-glucose.

It belongs to the UDP-glycosyltransferase family. As to expression, highly expressed in root. Expressed at lower level in kernel and cob. Weakly expressed in leaves. Weakly or not expressed in stems.

The catalysed reaction is cis-zeatin + UDP-alpha-D-glucose = O-beta-D-glucosyl-cis-zeatin + UDP + H(+). Utilizes UDP-glucose as the sugar donor and catalyzes the formation of O-beta-D-glucosyl-cis-zeatin from cis-zeatin. May regulate active versus storage forms of cytokinins and could have an impact on seed growth. In Zea mays (Maize), this protein is Cis-zeatin O-glucosyltransferase 1 (CISZOG1).